Here is a 130-residue protein sequence, read N- to C-terminus: Small ribosomal subunit protein uS11 (130 aa).

The protein belongs to the universal ribosomal protein uS11 family. Part of the 30S ribosomal subunit. Interacts with proteins S7 and S18. Binds to IF-3.

Its function is as follows. Located on the platform of the 30S subunit, it bridges several disparate RNA helices of the 16S rRNA. Forms part of the Shine-Dalgarno cleft in the 70S ribosome. The protein is Small ribosomal subunit protein uS11 of Nitratiruptor sp. (strain SB155-2).